A 101-amino-acid polypeptide reads, in one-letter code: Chaperone modulatory protein CbpM (101 aa).

Belongs to the CbpM family.

In terms of biological role, interacts with CbpA and inhibits both the DnaJ-like co-chaperone activity and the DNA binding activity of CbpA. Together with CbpA, modulates the activity of the DnaK chaperone system. Does not inhibit the co-chaperone activity of DnaJ. The polypeptide is Chaperone modulatory protein CbpM (Pseudomonas putida (strain ATCC 47054 / DSM 6125 / CFBP 8728 / NCIMB 11950 / KT2440)).